Reading from the N-terminus, the 454-residue chain is Aminodeoxychorismate synthase component 1 (454 aa).

Residues serine 37, 44 to 47, and 241 to 243 contribute to the L-tryptophan site; these read YNRF and PFS. Residue glutamate 259 is the Proton donor of the active site. The N6-(4-deoxychorismate)-lysine intermediate role is filled by lysine 275.

Belongs to the anthranilate synthase component I family. As to quaternary structure, monomer. Heterodimer consisting of two non-identical subunits: a glutamine amidotransferase subunit (PabA) and a aminodeoxychorismate synthase subunit (PabB). The cofactor is Mg(2+).

The catalysed reaction is chorismate + L-glutamine = 4-amino-4-deoxychorismate + L-glutamate. Its pathway is cofactor biosynthesis; tetrahydrofolate biosynthesis; 4-aminobenzoate from chorismate: step 1/2. Functionally, part of a heterodimeric complex that catalyzes the two-step biosynthesis of 4-amino-4-deoxychorismate (ADC), a precursor of p-aminobenzoate (PABA) and tetrahydrofolate. In the first step, a glutamine amidotransferase (PabA) generates ammonia as a substrate that, along with chorismate, is used in the second step, catalyzed by aminodeoxychorismate synthase (PabB) to produce ADC. The polypeptide is Aminodeoxychorismate synthase component 1 (pabB) (Salmonella typhimurium (strain LT2 / SGSC1412 / ATCC 700720)).